The primary structure comprises 174 residues: MIITIGGLPGTGTTTISKLLSEKYGLSHVCAGFIFRDMAKENNMTLQEFSNYAEKNSGVDNEIDRRQVEAAKSGNLILEGRLAGWILKKNDMVPDLSIWLKADPMVRCKRISEREHENVDLALEKMLLREASEKKRYKEIYNIEIDDLSIYDLVIESSKWGATGVFNIIEKAIK.

7-15 (GLPGTGTTT) contributes to the ATP binding site.

Belongs to the cytidylate kinase family. Type 2 subfamily.

Its subcellular location is the cytoplasm. It carries out the reaction CMP + ATP = CDP + ADP. The enzyme catalyses dCMP + ATP = dCDP + ADP. The protein is Cytidylate kinase of Methanococcus vannielii (strain ATCC 35089 / DSM 1224 / JCM 13029 / OCM 148 / SB).